Consider the following 357-residue polypeptide: Peptide chain release factor 1 (357 aa).

Gln-233 bears the N5-methylglutamine mark.

This sequence belongs to the prokaryotic/mitochondrial release factor family. Post-translationally, methylated by PrmC. Methylation increases the termination efficiency of RF1.

Its subcellular location is the cytoplasm. In terms of biological role, peptide chain release factor 1 directs the termination of translation in response to the peptide chain termination codons UAG and UAA. In Flavobacterium psychrophilum (strain ATCC 49511 / DSM 21280 / CIP 103535 / JIP02/86), this protein is Peptide chain release factor 1.